We begin with the raw amino-acid sequence, 333 residues long: Transmembrane protein I329L (333 aa).

An N-terminal signal peptide occupies residues 1 to 31 (MLRVFIFFVFLGSGLTGRIKPQITCKYFISE). Residues Asn-32, Asn-39, Asn-44, Asn-76, Asn-82, and Asn-101 are each glycosylated (N-linked (GlcNAc...) asparagine; by host). Over 32 to 239 (NNTWYKYNVT…NTERYKSCYP (208 aa)) the chain is Extracellular. An LRR repeat occupies 112 to 133 (ELKFLDLRYNDLQVIEYNILRK). N-linked (GlcNAc...) asparagine; by host glycosylation is found at Asn-181, Asn-185, and Asn-219. Cys-195 and Cys-237 are joined by a disulfide. Residues 240 to 260 (LVFISILCSCISFLFLFICLL) form a helical membrane-spanning segment. At 261 to 333 (RSICKKYSCT…EKKVSCSRRK (73 aa)) the chain is on the cytoplasmic side.

It belongs to the asfivirus I329L family. In terms of processing, highly glycosylated.

It localises to the host endoplasmic reticulum membrane. The protein localises to the host Golgi apparatus membrane. In terms of biological role, viral TLR3 homolog that probably prevents TLR3 dimerization and subsequent induction of IFN. Inhibits dsRNA-stimulated activation of NF-kB and IRF3. This chain is Transmembrane protein I329L, found in Ornithodoros (relapsing fever ticks).